The following is a 200-amino-acid chain: 3-isopropylmalate dehydratase small subunit (200 aa).

Belongs to the LeuD family. LeuD type 1 subfamily. Heterodimer of LeuC and LeuD.

The enzyme catalyses (2R,3S)-3-isopropylmalate = (2S)-2-isopropylmalate. It participates in amino-acid biosynthesis; L-leucine biosynthesis; L-leucine from 3-methyl-2-oxobutanoate: step 2/4. Catalyzes the isomerization between 2-isopropylmalate and 3-isopropylmalate, via the formation of 2-isopropylmaleate. This chain is 3-isopropylmalate dehydratase small subunit, found in Serratia proteamaculans (strain 568).